Consider the following 90-residue polypeptide: Small ribosomal subunit protein uS15 (90 aa).

This sequence belongs to the universal ribosomal protein uS15 family. Part of the 30S ribosomal subunit. Forms a bridge to the 50S subunit in the 70S ribosome, contacting the 23S rRNA.

In terms of biological role, one of the primary rRNA binding proteins, it binds directly to 16S rRNA where it helps nucleate assembly of the platform of the 30S subunit by binding and bridging several RNA helices of the 16S rRNA. Its function is as follows. Forms an intersubunit bridge (bridge B4) with the 23S rRNA of the 50S subunit in the ribosome. The polypeptide is Small ribosomal subunit protein uS15 (Wolbachia sp. subsp. Drosophila simulans (strain wRi)).